The primary structure comprises 778 residues: Endonuclease MutS2 (778 aa).

328 to 335 (GPNTGGKT) is a binding site for ATP. In terms of domain architecture, Smr spans 702-777 (LDLRGKRYEE…GSGATIVTFK (76 aa)).

This sequence belongs to the DNA mismatch repair MutS family. MutS2 subfamily. Homodimer. Binds to stalled ribosomes, contacting rRNA.

Its function is as follows. Endonuclease that is involved in the suppression of homologous recombination and thus may have a key role in the control of bacterial genetic diversity. Functionally, acts as a ribosome collision sensor, splitting the ribosome into its 2 subunits. Detects stalled/collided 70S ribosomes which it binds and splits by an ATP-hydrolysis driven conformational change. Acts upstream of the ribosome quality control system (RQC), a ribosome-associated complex that mediates the extraction of incompletely synthesized nascent chains from stalled ribosomes and their subsequent degradation. Probably generates substrates for RQC. The polypeptide is Endonuclease MutS2 (Streptococcus pneumoniae (strain 70585)).